Consider the following 396-residue polypeptide: Cytochrome b (396 aa).

A run of 4 helical transmembrane segments spans residues 37-57 (FGSL…ILAM), 81-102 (WLMR…YAHI), 117-137 (WNVG…GYVL), and 182-202 (FFTF…IHIM). The heme b site is built by histidine 87 and histidine 101. Residues histidine 186 and histidine 200 each contribute to the heme b site. Histidine 205 is an a ubiquinone binding site. 4 helical membrane passes run 230-250 (FKDI…SLLA), 292-312 (LGGV…PFTH), 324-344 (LAQI…WLGG), and 351-371 (FILM…LVFP).

The protein belongs to the cytochrome b family. In terms of assembly, the cytochrome bc1 complex contains 3 respiratory subunits (MT-CYB, CYC1 and UQCRFS1), 2 core proteins (UQCRC1 and UQCRC2) and probably 6 low-molecular weight proteins. The cofactor is heme b.

The protein resides in the mitochondrion inner membrane. Its function is as follows. Component of the ubiquinol-cytochrome c reductase complex (complex III or cytochrome b-c1 complex) that is part of the mitochondrial respiratory chain. The b-c1 complex mediates electron transfer from ubiquinol to cytochrome c. Contributes to the generation of a proton gradient across the mitochondrial membrane that is then used for ATP synthesis. This Petromyzon marinus (Sea lamprey) protein is Cytochrome b (mt-cyb).